A 310-amino-acid polypeptide reads, in one-letter code: Protein FAM153A (310 aa).

Disordered stretches follow at residues 39–58, 108–136, 156–184, and 250–297; these read LGVP…LCPP, QTNG…HTME, SYNG…DLEE, and TITG…KKSR. A compositionally biased stretch (low complexity) spans 259 to 268; sequence SASPSSAPAE. Residues 270–282 show a composition bias toward basic and acidic residues; the sequence is ATEKTKVEEEVKT. Positions 283–297 are enriched in basic residues; sequence RKPKKKTRKPSKKSR.

Belongs to the FAM153 family.

In Homo sapiens (Human), this protein is Protein FAM153A (FAM153A).